Reading from the N-terminus, the 643-residue chain is Probable potassium transport system protein Kup 2 (643 aa).

The disordered stretch occupies residues 1-20; that stretch reads MSSHVPSFLRGTPDMTAHGG. A run of 12 helical transmembrane segments spans residues 27–47, 70–90, 120–140, 157–177, 185–205, 231–251, 267–287, 300–320, 357–377, 389–409, 419–439, and 440–460; these read VAGL…TSPL, VLSL…VIII, LMVS…SIIT, PHLE…LFAI, VGKM…ILGI, GWHA…AEAL, WYLL…ALLI, LAPA…TVIA, IYLP…VVGF, VAVT…MLLI, WLIG…SIKI, and PDGG…LTTW.

This sequence belongs to the HAK/KUP transporter (TC 2.A.72) family.

The protein localises to the cell inner membrane. It catalyses the reaction K(+)(in) + H(+)(in) = K(+)(out) + H(+)(out). In terms of biological role, transport of potassium into the cell. Likely operates as a K(+):H(+) symporter. This is Probable potassium transport system protein Kup 2 from Paramagnetospirillum magneticum (strain ATCC 700264 / AMB-1) (Magnetospirillum magneticum).